Here is a 563-residue protein sequence, read N- to C-terminus: Beta-catenin-like protein 1 (563 aa).

Position 1 is an N-acetylmethionine (methionine 1). Residues 1–49 (MDVGELLSYQPNRGTKRPRDDEEEELKMRRRQAGTRERGRYREEEMTVV) are disordered. The Nuclear localization signal motif lies at 16–33 (KRPRDDEEEELKMRRRQA). Positions 34 to 45 (GTRERGRYREEE) are enriched in basic and acidic residues. HEAT repeat units follow at residues 79-129 (ESSV…VVAT) and 134-176 (YHLL…TLHE). Residue lysine 91 is modified to N6-acetyllysine. The Nuclear export signal (NES) signature appears at 130 to 140 (MPDLYHLLVEL). ARM repeat units follow at residues 178–228 (EEGA…MAEF), 229–273 (RPEM…LQDN), 274–323 (DENR…CLML), 325–363 (SNRERFLKGEGLQLMNLMLREKKISRSSALKVLDHAMIG), and 364–417 (PEGT…LLRN). Serine 389 is subject to Phosphoserine. Residues 476-540 (DIEDEFYLRR…HIIKEYAENI (65 aa)) adopt a coiled-coil conformation. A Phosphoserine modification is found at serine 545.

Component of the PRP19-CDC5L splicing complex composed of a core complex comprising a homotetramer of PRPF19, CDC5L, PLRG1 and BCAS2, and at least three less stably associated proteins CTNNBL1, CWC15 and HSPA8. Interacts directly with CWC15 and CDC5L in the complex. Interacts with AICDA; the interaction is important for the antibody diversification activity of AICDA. Interacts with PRPF31 (via its NLS). Interacts (via its N-terminal NLS) with KPNA1 and KPNA2.

It is found in the nucleus. In terms of biological role, component of the PRP19-CDC5L complex that forms an integral part of the spliceosome and is required for activating pre-mRNA splicing. Participates in AID/AICDA-mediated somatic hypermutation (SHM) and class-switch recombination (CSR), 2 processes resulting in the production of high-affinity, mutated isotype-switched antibodies. This Bos taurus (Bovine) protein is Beta-catenin-like protein 1 (CTNNBL1).